The following is a 321-amino-acid chain: MNKYQTHWVEHSEVKILSTTGKKHIALVAGGMSAEREVSLVSSEGVSKALIELGYKVTFIDMGADIAVKLQEIKPDIVFNCLHGTYGEDGCLPGLLNIMRIPYTHSGVLSSALAFDKIHSRSWFLTNNINMAESIIVNKSDNIKSDPVKRPYVIKPLTQGSSIGVEVIFEEDDFNFADYNFPYGYQVIIEQYIKGRELQVAVLNGKALGALEIKLLKNRFYDYETKYTEGFAEHLCPAPLPTNLYEKLLVESEKIYKTMNCKGPARAEFILEEQTNKLYALEINTHPGMTPLSIVPEIAAYAGINFTNLIEEIIKTASFES.

The ATP-grasp domain occupies 121-315 (RSWFLTNNIN…FTNLIEEIIK (195 aa)). 147 to 199 (PVKRPYVIKPLTQGSSIGVEVIFEEDDFNFADYNFPYGYQVIIEQYIKGRELQ) contributes to the ATP binding site. Mg(2+)-binding residues include Glu268, Glu282, and Asn284.

The protein belongs to the D-alanine--D-alanine ligase family. Requires Mg(2+) as cofactor. Mn(2+) is required as a cofactor.

The protein localises to the cytoplasm. The enzyme catalyses 2 D-alanine + ATP = D-alanyl-D-alanine + ADP + phosphate + H(+). The protein operates within cell wall biogenesis; peptidoglycan biosynthesis. Cell wall formation. In Rickettsia felis (strain ATCC VR-1525 / URRWXCal2) (Rickettsia azadi), this protein is D-alanine--D-alanine ligase.